The following is a 711-amino-acid chain: Polyribonucleotide nucleotidyltransferase (711 aa).

Mg(2+) contacts are provided by D486 and D492. In terms of domain architecture, KH spans 553–612 (PRIHTIKISTDKIKDVIGKGGSVIRALTEETGTTIEIEDDGTVKIAATDGEKAKYAIRRI). The S1 motif domain occupies 622-690 (GRIYNGKVTR…RQGRVRLSIK (69 aa)). The disordered stretch occupies residues 689–711 (IKEATEQTQPAAAPEAPTSEQGE). The segment covering 694-711 (EQTQPAAAPEAPTSEQGE) has biased composition (low complexity).

This sequence belongs to the polyribonucleotide nucleotidyltransferase family. Component of the RNA degradosome, which is a multiprotein complex involved in RNA processing and mRNA degradation. The cofactor is Mg(2+).

It localises to the cytoplasm. It carries out the reaction RNA(n+1) + phosphate = RNA(n) + a ribonucleoside 5'-diphosphate. Involved in mRNA degradation. Catalyzes the phosphorolysis of single-stranded polyribonucleotides processively in the 3'- to 5'-direction. The polypeptide is Polyribonucleotide nucleotidyltransferase (Salmonella arizonae (strain ATCC BAA-731 / CDC346-86 / RSK2980)).